Here is a 201-residue protein sequence, read N- to C-terminus: Heat shock protein beta-1 (201 aa).

Omega-N-methylarginine is present on arginine 12. The residue at position 15 (serine 15) is a Phosphoserine; by MAPKAPK2 and MAPKAPK3. Serine 27 is subject to Phosphoserine. The segment at 68-201 is interaction with TGFB1I1; the sequence is AYNRALSRQL…AGKSEQPENK (134 aa). One can recognise a sHSP domain in the interval 72-180; it reads ALSRQLSSGV…QSAEITIPVT (109 aa). Phosphoserine; by MAPKAPK2, MAPKAPK3 and MAPKAPK5 is present on residues serine 74 and serine 78. Phosphoserine occurs at positions 79, 82, and 94. Position 119 is an N6-acetyllysine (lysine 119). Position 170 is a phosphothreonine (threonine 170). Phosphoserine is present on residues serine 172 and serine 195.

This sequence belongs to the small heat shock protein (HSP20) family. As to quaternary structure, homooligomer. Homodimer; becomes monomeric upon activation. Heterooligomer; with HSPB6. Associates with alpha- and beta-tubulin. Interacts with TGFB1I1. Interacts with CRYAB. Interacts with HSPB8. Interacts with HSPBAP1. Phosphorylated upon exposure to protein kinase C activators and heat shock. Phosphorylation by MAPKAPK2 and MAPKAPK3 in response to stress dissociates HSPB1 from large small heat-shock protein (sHsps) oligomers and impairs its chaperone activity and ability to protect against oxidative stress effectively. Phosphorylation by MAPKAPK5 in response to PKA stimulation induces F-actin rearrangement.

It localises to the cytoplasm. Its subcellular location is the nucleus. It is found in the cytoskeleton. The protein resides in the spindle. Functionally, small heat shock protein which functions as a molecular chaperone probably maintaining denatured proteins in a folding-competent state. Plays a role in stress resistance and actin organization. Through its molecular chaperone activity may regulate numerous biological processes including the phosphorylation and the axonal transport of neurofilament proteins. The chain is Heat shock protein beta-1 (HSPB1) from Bos taurus (Bovine).